The primary structure comprises 251 residues: HTH-type transcriptional regulator UlaR (251 aa).

The HTH deoR-type domain maps to E3–A58. The H-T-H motif DNA-binding region spans V20 to D39.

It is found in the cytoplasm. Functionally, represses ulaG and the ulaABCDEF operon. In Salmonella arizonae (strain ATCC BAA-731 / CDC346-86 / RSK2980), this protein is HTH-type transcriptional regulator UlaR.